The following is a 503-amino-acid chain: AMP phosphorylase (503 aa).

AMP contacts are provided by residues Gly-168, 194–199 (SRAITS), and Thr-203. The active-site Proton donor is the Asp-256. AMP contacts are provided by Ser-264 and Lys-288.

The protein belongs to the thymidine/pyrimidine-nucleoside phosphorylase family. Type 2 subfamily.

The enzyme catalyses AMP + phosphate = alpha-D-ribose 1,5-bisphosphate + adenine. It catalyses the reaction CMP + phosphate = cytosine + alpha-D-ribose 1,5-bisphosphate. It carries out the reaction UMP + phosphate = alpha-D-ribose 1,5-bisphosphate + uracil. Its function is as follows. Catalyzes the conversion of AMP and phosphate to adenine and ribose 1,5-bisphosphate (R15P). Exhibits phosphorylase activity toward CMP and UMP in addition to AMP. Functions in an archaeal AMP degradation pathway, together with R15P isomerase and RubisCO. This chain is AMP phosphorylase, found in Pyrococcus horikoshii (strain ATCC 700860 / DSM 12428 / JCM 9974 / NBRC 100139 / OT-3).